The following is a 608-amino-acid chain: ABC transporter ATP-binding protein RamB (608 aa).

The next 5 helical transmembrane spans lie at 25–45 (GVLV…FLVG), 66–86 (LWLG…RGVF), 141–161 (GLVL…LGLL), 166–186 (ALLV…LVTL), and 253–273 (AALG…VEWL). In terms of domain architecture, ABC transmembrane type-1 spans 30-296 (LALWSLAESG…FTYLVQSLLP (267 aa)). The tract at residues 321–362 (GPEPEPEPEPEPEPEPELGSGLEPEPEPASEPESGPSTASAS) is disordered. Residues 324-336 (PEPEPEPEPEPEP) show a composition bias toward acidic residues. Over residues 351-362 (EPESGPSTASAS) the composition is skewed to low complexity. The 230-residue stretch at 376–605 (VELRSVTLSY…SPLYRDLTGH (230 aa)) folds into the ABC transporter domain. An ATP-binding site is contributed by 410 to 417 (GPSGIGKS).

This sequence belongs to the ABC transporter superfamily.

The protein localises to the cell membrane. Its function is as follows. Probably involved in exporting SapB from the cell. Expression of the ram locus (ramA, ramB and ramR) induces rapid aerial mycelium formation in S.lividans. This Streptomyces coelicolor (strain ATCC BAA-471 / A3(2) / M145) protein is ABC transporter ATP-binding protein RamB.